We begin with the raw amino-acid sequence, 214 residues long: Large ribosomal subunit protein uL3 (214 aa).

A disordered region spans residues 134-161; it reads THGNSLSHRAPGSIGQCQTPGRVMKGKK. Position 151 is an N5-methylglutamine (Gln151).

This sequence belongs to the universal ribosomal protein uL3 family. In terms of assembly, part of the 50S ribosomal subunit. Forms a cluster with proteins L14 and L19. Post-translationally, methylated by PrmB.

Its function is as follows. One of the primary rRNA binding proteins, it binds directly near the 3'-end of the 23S rRNA, where it nucleates assembly of the 50S subunit. The protein is Large ribosomal subunit protein uL3 of Teredinibacter turnerae (strain ATCC 39867 / T7901).